The following is a 262-amino-acid chain: MRYQNMFETLKKHEKMAFIPFVTLGDPNYEWSFEIIKTLIISGVSALELGFAFSDPVADGITIQVSHLRALKHASMAKNFQLLRAVRDYNPHIPIGLLAYANLIFSYGVDGFYAQIKECGVDSVLIADMPLIEKELVIKSAQKHQIKQIFIASPNASSKDLEQVATHSQGYIYTLARSGVTGASRILENDASAIIKTLKAFSPTPALLGFGISQKEHITNAKGMGADGVICGSALVKIIEENLNDENAMLEKIKGFIGGMIF.

Residues Glu48 and Asp59 each act as proton acceptor in the active site.

The protein belongs to the TrpA family. Tetramer of two alpha and two beta chains.

It carries out the reaction (1S,2R)-1-C-(indol-3-yl)glycerol 3-phosphate + L-serine = D-glyceraldehyde 3-phosphate + L-tryptophan + H2O. It functions in the pathway amino-acid biosynthesis; L-tryptophan biosynthesis; L-tryptophan from chorismate: step 5/5. Functionally, the alpha subunit is responsible for the aldol cleavage of indoleglycerol phosphate to indole and glyceraldehyde 3-phosphate. The polypeptide is Tryptophan synthase alpha chain (Helicobacter pylori (strain G27)).